We begin with the raw amino-acid sequence, 418 residues long: MAGPFSRLLSARPGLRLLALAGAGSLTAGILLRPESVGAAAAERRRLYPPSAEYPDLRKHNNCMASHLTPAVYARLCDKTTPTGWTLDQCIQTGVDNPGHPFIKTVGMVAGDEETYEVFAELFDPVIQERHNGYDPRTMKHTTDLDASKIRSGYFDERYVLSSRVRTGRSIRGLSLPPACTRAERREVERVVVDALSGLKGDLAGRYYRLSEMTEAEQQQLIDDHFLFDKPVSPLLTAAGMARDWPDARGIWHNNEKSFLIWVNEEDHTRVISMEKGGNMKRVFERFCRGLKEVEKLIQERGWEFMWNERLGYILTCPSNLGTGLRAGVHIKLPLLSKDNRFPKILENLRLQKRGTGGVDTAATGSVFDISNLDRLGKSEVELVQLVIDGVNYLIDCERRLERGQDIRIPPPLVHSKH.

The N-terminal 39 residues, 1 to 39 (MAGPFSRLLSARPGLRLLALAGAGSLTAGILLRPESVGA), are a transit peptide targeting the mitochondrion. The segment at 40–64 (AAAERRRLYPPSAEYPDLRKHNNCM) is cardiolipin-binding. Residues 46 to 132 (RLYPPSAEYP…FDPVIQERHN (87 aa)) enclose the Phosphagen kinase N-terminal domain. Serine 152 is subject to Phosphoserine. A Phosphagen kinase C-terminal domain is found at 159 to 401 (YVLSSRVRTG…NYLIDCERRL (243 aa)). 162–166 (SSRVR) is an ATP binding site. Serine 197 bears the Phosphoserine mark. Threonine 214 bears the Phosphothreonine mark. Position 225 (histidine 225) interacts with ATP. At serine 233 the chain carries Phosphoserine. ATP contacts are provided by residues arginine 270, arginine 326, and 354–359 (RGTGGV). Threonine 356 is subject to Phosphothreonine. At serine 366 the chain carries Phosphoserine. An ATP-binding site is contributed by aspartate 369.

This sequence belongs to the ATP:guanido phosphotransferase family. Exists as an octamer composed of four MTCK homodimers.

It localises to the mitochondrion inner membrane. The enzyme catalyses creatine + ATP = N-phosphocreatine + ADP + H(+). Reversibly catalyzes the transfer of phosphate between ATP and various phosphogens (e.g. creatine phosphate). Creatine kinase isoenzymes play a central role in energy transduction in tissues with large, fluctuating energy demands, such as skeletal muscle, heart, brain and spermatozoa. The chain is Creatine kinase U-type, mitochondrial (Ckmt1) from Mus musculus (Mouse).